The primary structure comprises 348 residues: D-alanine--D-alanine ligase (348 aa).

In terms of domain architecture, ATP-grasp spans 132 to 334 (KRVLESIGIP…YPDLIEELVT (203 aa)). 162-217 (LARLTFPIFVKPANMGSSVGISKAQTKVELRKAIQLALTYDSRVLIEQGVIAREIE) contacts ATP. Residues aspartate 288, glutamate 301, and asparagine 303 each contribute to the Mg(2+) site.

The protein belongs to the D-alanine--D-alanine ligase family. Requires Mg(2+) as cofactor. Mn(2+) is required as a cofactor.

The protein localises to the cytoplasm. It catalyses the reaction 2 D-alanine + ATP = D-alanyl-D-alanine + ADP + phosphate + H(+). It functions in the pathway cell wall biogenesis; peptidoglycan biosynthesis. Functionally, cell wall formation. This is D-alanine--D-alanine ligase from Streptococcus pyogenes serotype M4 (strain MGAS10750).